We begin with the raw amino-acid sequence, 363 residues long: Serpentine receptor class beta-18 (363 aa).

Transmembrane regions (helical) follow at residues 52–72, 92–112, 135–155, 172–192, 218–238, 276–296, and 303–323; these read LAQFSHVVFSFMGLIIVVVYI, MLLFIVAHSIDMIVLHIYHII, FRYTFSFCSMGLAICTYCIYI, LILAAQICQLIVISSLIIIWV, KATIAVFPINFICFFLSIGLF, AALMALFSVASLLMRLVYNFL, and TIATLSYIMSIYCFTVPLVIV.

It belongs to the nematode receptor-like protein srb family.

The protein localises to the membrane. The polypeptide is Serpentine receptor class beta-18 (srb-18) (Caenorhabditis elegans).